Here is a 698-residue protein sequence, read N- to C-terminus: Elongation factor G (698 aa).

Residues 8-284 form the tr-type G domain; the sequence is ANVRNIGIMA…AVVDFLPSPL (277 aa). Residues 17-24, 81-85, and 135-138 contribute to the GTP site; these read AHIDAGKT, DTPGH, and NKLD. The interval 289-309 is disordered; sequence IEGTGTDGETPLQRKPSTSEP.

This sequence belongs to the TRAFAC class translation factor GTPase superfamily. Classic translation factor GTPase family. EF-G/EF-2 subfamily.

It is found in the cytoplasm. Catalyzes the GTP-dependent ribosomal translocation step during translation elongation. During this step, the ribosome changes from the pre-translocational (PRE) to the post-translocational (POST) state as the newly formed A-site-bound peptidyl-tRNA and P-site-bound deacylated tRNA move to the P and E sites, respectively. Catalyzes the coordinated movement of the two tRNA molecules, the mRNA and conformational changes in the ribosome. The polypeptide is Elongation factor G (Salinispora arenicola (strain CNS-205)).